Reading from the N-terminus, the 222-residue chain is Uridine diphosphate glucose pyrophosphatase NUDT14 (222 aa).

One can recognise a Nudix hydrolase domain in the interval 38-206; that stretch reads KTHDSVTILM…DIPKTLGVIY (169 aa). A Nudix box motif is present at residues 111–129; sequence PGLSLEEAACKEAWEECGY.

The protein belongs to the Nudix hydrolase family. In terms of assembly, homodimer. Requires Mg(2+) as cofactor.

The protein localises to the cytoplasm. It catalyses the reaction UDP-sugar + H2O = UMP + alpha-D-aldose 1-phosphate.. In terms of biological role, hydrolyzes UDP-glucose to glucose 1-phosphate and UMP and ADP-ribose to ribose 5-phosphate and AMP. The physiological substrate is probably UDP-glucose. Poor activity on other substrates such as ADP-glucose, CDP-glucose, GDP-glucose and GDP-mannose. This chain is Uridine diphosphate glucose pyrophosphatase NUDT14 (Nudt14), found in Mus musculus (Mouse).